A 122-amino-acid chain; its full sequence is MIQQESRLKVADNSGARELLVIKVLGGSRVKFGYIGDIIVATVKQATPGGVVKKGDVVKAVVVRTKQGAHRADGSYIKFDENAAVLIKDDKSPQGTRIFGPVARELRDKDYMKIVSLAPEVL.

It belongs to the universal ribosomal protein uL14 family. As to quaternary structure, part of the 50S ribosomal subunit. Forms a cluster with proteins L3 and L19. In the 70S ribosome, L14 and L19 interact and together make contacts with the 16S rRNA in bridges B5 and B8.

Functionally, binds to 23S rRNA. Forms part of two intersubunit bridges in the 70S ribosome. This chain is Large ribosomal subunit protein uL14, found in Pediococcus pentosaceus (strain ATCC 25745 / CCUG 21536 / LMG 10740 / 183-1w).